A 121-amino-acid polypeptide reads, in one-letter code: Chronic lymphocytic leukemia up-regulated protein 1 (121 aa).

Specifically expressed in chronic lymphocytic leukemia (CLL) cells from patients without immunoglobulin heavy-chain hypermutations. Expression is detected in all CLL cells and levels are similar in patients before and after treatment.

It localises to the cytoplasm. This is Chronic lymphocytic leukemia up-regulated protein 1 (CLLU1) from Homo sapiens (Human).